Here is a 375-residue protein sequence, read N- to C-terminus: MYIDRIYLKDFRNLTENLIKLDNRLNVFVGLNGQGKTNFLEAVYLMGTASSHRTNADRELIRWNQDRAVVQLYLVKRDEKLKISLEINKKVKKLEINDVPQERVSELLGNLNVVLFSPEDLKLVKEGPHFRRKFLDTELSQVKPYYHYLLKKYNHILSQRNNLLKELMTGNKSDTTLLEVWDEQLVEIGAKIIQNRIEVIDKLKILARLSHRQITDGLENITLSYESSLSDRIEEKELEEIKIIFRNKLVNNRNEEITRGYTLAGPQRDDLKITMNGIDIRKYGSQGQQRTAALSLKLAELEFMKSEQGEYPVLLLDDVFSELDNKRRHRLIDIMAHRVQTFITATDFFNLNEINTPSIKVFKVRNGLITRYKSL.

ATP is bound at residue 30-37 (GLNGQGKT).

It belongs to the RecF family.

It is found in the cytoplasm. In terms of biological role, the RecF protein is involved in DNA metabolism; it is required for DNA replication and normal SOS inducibility. RecF binds preferentially to single-stranded, linear DNA. It also seems to bind ATP. The polypeptide is DNA replication and repair protein RecF (Halothermothrix orenii (strain H 168 / OCM 544 / DSM 9562)).